Here is a 354-residue protein sequence, read N- to C-terminus: MALTTHSGKLIPELQFKAHHFIDKTTVLYGPSKTGKTVYVKHIMKILQPHIEQILVVAPSEPSNRSYEGFVHPTLIHYRLWLADKQKKNDNKGAERFLEAIWQRQTMMSSIYSRVNNIDMLKTLYHKLPIDIQQKENKNIAKVECLKAEQTDQKKEEKITSLYQQLLKKIIIQNIHMYKNLCLTENEKFTLNYINLNPRLLLILDDCAAELHPLFTKEIFKKFFYQNRHCFISMIICCQDDTDLPANLRKNAFVSIFTNASICMSNFSRQSNRYSKQDKEYVEEISHIVFKGYRKLVYIREDENRQHFYHSTVPLPTAFSFGSKALLKLCKAVYSKEVVIDKSNPYWSKFRLNF.

It belongs to the asfivirus B354L family.

This is an uncharacterized protein from Ornithodoros (relapsing fever ticks).